The following is a 142-amino-acid chain: SLSDKDKAAVKLLWSKISKSSDAIGNDALSRMIVVYPQTKTYFAHWPDLSPGSPHVKAHGKTVMGGIALAVSKIDDLRAGLLDLSEQHAYKLRVDPANFKILSHCILVVISMMFPKEFTPEAHVSLDKFLSGVSLALSERYR.

Serine 1 carries the N-acetylserine modification. Residues 1 to 142 form the Globin domain; sequence SLSDKDKAAV…VSLALSERYR (142 aa). Histidine 59 lines the O2 pocket. Histidine 88 contacts heme b.

This sequence belongs to the globin family. As to quaternary structure, hb1 is a heterotetramer of two alpha-1 chains and two beta-1 chains. Hb2 is a heterotetramer of two alpha-2 chains and two beta-1 chains. HbC is a heterotetramer of two alpha-1 chains and two beta-2 chains. As to expression, red blood cells.

Its function is as follows. Involved in oxygen transport from gills to the various peripheral tissues. In Eleginops maclovinus (Patagonian blennie), this protein is Hemoglobin subunit alpha 1.